The chain runs to 533 residues: NADH-quinone oxidoreductase subunit N (533 aa).

14 helical membrane-spanning segments follow: residues 13-33 (VWPLLVVFGVAAVGVLVEGFV), 40-60 (LVQAALAIAGVVVALVGTILV), 87-107 (PALFIWGMLLVFALGGALLFA), 141-161 (HTEVYPLMMFALGGMMLFAAA), 164-184 (LLTLFVALEVLSLPLYLLSGL), 200-220 (FMLGAFSSGFFLYGAALVYGF), 243-263 (LLIGIGMLSVGLLFKVGAVPF), 275-295 (PTAVTAFMAAGTKIAAFGAML), 310-330 (QPMLWIIAILTMLVGALIAIV), 337-357 (MLAYSSVAHTGFLLTGVLGVQ), 373-393 (VLFYLVTYGFAVVGAFAVVTL), 417-437 (VAGVFAFFLLSMAGIPLTAGF), 451-471 (GAWPVVIAAVLCSIIAVFFYV), and 502-522 (ATIFVGVAATLVLGVVPGPVL).

It belongs to the complex I subunit 2 family. In terms of assembly, NDH-1 is composed of 14 different subunits. Subunits NuoA, H, J, K, L, M, N constitute the membrane sector of the complex.

The protein resides in the cell membrane. It catalyses the reaction a quinone + NADH + 5 H(+)(in) = a quinol + NAD(+) + 4 H(+)(out). Its function is as follows. NDH-1 shuttles electrons from NADH, via FMN and iron-sulfur (Fe-S) centers, to quinones in the respiratory chain. The immediate electron acceptor for the enzyme in this species is believed to be a menaquinone. Couples the redox reaction to proton translocation (for every two electrons transferred, four hydrogen ions are translocated across the cytoplasmic membrane), and thus conserves the redox energy in a proton gradient. The sequence is that of NADH-quinone oxidoreductase subunit N from Nocardioides sp. (strain ATCC BAA-499 / JS614).